We begin with the raw amino-acid sequence, 117 residues long: Transcription elongation factor SPT4 (117 aa).

Residues 1–40 (MALETVPKDLRHLRACLLCSLVKTIDQFEYDGCDNCDAYL) form an interaction with SUPT5H region. A C4-type zinc finger spans residues 16 to 36 (CLLCSLVKTIDQFEYDGCDNC).

Belongs to the SPT4 family. As to quaternary structure, interacts with SUPT5H to form the DSIF complex. DSIF interacts with RNA polymerase II and with the positive transcription elongation factor b complex (P-TEFb complex), which is composed of CDK9 and cyclin-T.

It is found in the nucleus. Its function is as follows. May function as a component of the DRB sensitivity-inducing factor complex (DSIF complex), which regulates transcription elongation by RNA polymerase II. Probably enhances transcriptional pausing at sites proximal to the promoter, which may in turn facilitate the assembly of an elongation competent RNA polymerase II complex. The polypeptide is Transcription elongation factor SPT4 (supt4h1) (Xenopus laevis (African clawed frog)).